The chain runs to 505 residues: Betaine aldehyde dehydrogenase (505 aa).

Gly239–Gly244 contacts NAD(+). Glu261 functions as the Proton acceptor in the catalytic mechanism. The active-site Nucleophile is the Cys296. Residues Ser503–Leu505 carry the Microbody targeting signal motif.

This sequence belongs to the aldehyde dehydrogenase family. Homodimer.

The protein resides in the peroxisome. It catalyses the reaction betaine aldehyde + NAD(+) + H2O = glycine betaine + NADH + 2 H(+). The protein operates within amine and polyamine biosynthesis; betaine biosynthesis via choline pathway; betaine from betaine aldehyde: step 1/1. The sequence is that of Betaine aldehyde dehydrogenase from Hordeum vulgare (Barley).